The sequence spans 150 residues: UPF0506 protein SJCHGC03047 (150 aa).

The N-terminal stretch at Met-1–Ser-18 is a signal peptide. N-linked (GlcNAc...) asparagine glycans are attached at residues Asn-20, Asn-48, and Asn-110. 3 cysteine pairs are disulfide-bonded: Cys-116–Cys-130, Cys-123–Cys-134, and Cys-129–Cys-139.

This sequence belongs to the UPF0506 family.

It is found in the secreted. This Schistosoma japonicum (Blood fluke) protein is UPF0506 protein SJCHGC03047.